The following is a 758-amino-acid chain: 5-methyltetrahydropteroyltriglutamate--homocysteine methyltransferase (758 aa).

Residues 16-19 and Lys-112 contribute to the 5-methyltetrahydropteroyltri-L-glutamate site; that span reads RELK. Residues 433–435 and Glu-486 each bind L-homocysteine; that span reads IGS. Residues 433 to 435 and Glu-486 each bind L-methionine; that span reads IGS. 5-methyltetrahydropteroyltri-L-glutamate-binding positions include 517–518 and Trp-563; that span reads RC. An L-homocysteine-binding site is contributed by Asp-601. Asp-601 lines the L-methionine pocket. Glu-607 contacts 5-methyltetrahydropteroyltri-L-glutamate. Residues His-643, Cys-645, and Glu-667 each contribute to the Zn(2+) site. His-696 acts as the Proton donor in catalysis. A Zn(2+)-binding site is contributed by Cys-728.

It belongs to the vitamin-B12 independent methionine synthase family. Zn(2+) serves as cofactor.

It carries out the reaction 5-methyltetrahydropteroyltri-L-glutamate + L-homocysteine = tetrahydropteroyltri-L-glutamate + L-methionine. It participates in amino-acid biosynthesis; L-methionine biosynthesis via de novo pathway; L-methionine from L-homocysteine (MetE route): step 1/1. In terms of biological role, catalyzes the transfer of a methyl group from 5-methyltetrahydrofolate to homocysteine resulting in methionine formation. The polypeptide is 5-methyltetrahydropteroyltriglutamate--homocysteine methyltransferase (Neisseria meningitidis serogroup B (strain ATCC BAA-335 / MC58)).